The primary structure comprises 356 residues: MEDIHARFHIDWPGFRLDVDLTLPGRGVTALFGHSGSGKTTLLRCIAGIERVSAGRLTFNGEVWQDEKIWVPTHKRPLGYVFQEASLFPHLTVLGNLRFGMKRASGPVRVSLDQAVELLGIGHLLDRKPDRLSGGERQRVAIARALAVSPRVLLMDEPLAALDLKRKQEILPYLERLHDELDIPVLYVSHSPDEVARLADHLVAMEEGRVIAAGPLKETLARLDLPIRLGEDAGAVLDAVVGERDESWHLARLDFPGGSLWTRDRGIPVGRKIRVRVLARDVSLARQRQEETSVLNLLRGRVDAIEDEDHPGLALVRVRVGESPLLARLTKRSASALGIVRGQEVWVQVKSVALME.

One can recognise an ABC transporter domain in the interval 1–232 (MEDIHARFHI…LDLPIRLGED (232 aa)). ATP is bound at residue 33–40 (GHSGSGKT). In terms of domain architecture, Mop spans 291 to 356 (ETSVLNLLRG…VQVKSVALME (66 aa)).

This sequence belongs to the ABC transporter superfamily. Molybdate importer (TC 3.A.1.8) family. In terms of assembly, the complex is composed of two ATP-binding proteins (ModC), two transmembrane proteins (ModB) and a solute-binding protein (ModA).

It localises to the cell inner membrane. The catalysed reaction is molybdate(out) + ATP + H2O = molybdate(in) + ADP + phosphate + H(+). Part of the ABC transporter complex ModABC involved in molybdenum import. Responsible for energy coupling to the transport system. This is Molybdenum import ATP-binding protein ModC from Methylococcus capsulatus (strain ATCC 33009 / NCIMB 11132 / Bath).